We begin with the raw amino-acid sequence, 53 residues long: UPF0391 membrane protein PA5482 (53 aa).

The next 2 membrane-spanning stretches (helical) occupy residues 4–24 (WAITFLIIAIIAAVLGFGGIA) and 29–49 (GIAKILFVLFLVLFVVSFFFG).

It belongs to the UPF0391 family.

The protein localises to the cell membrane. The sequence is that of UPF0391 membrane protein PA5482 from Pseudomonas aeruginosa (strain ATCC 15692 / DSM 22644 / CIP 104116 / JCM 14847 / LMG 12228 / 1C / PRS 101 / PAO1).